The primary structure comprises 230 residues: C-reactive protein (230 aa).

A signal peptide spans 1–19 (MEKLLWCLLITISFSQAFG). Residues 24–223 (SKQAFVFPGV…DVFIKPQLWP (200 aa)) form the Pentraxin (PTX) domain. A disulfide bond links Cys55 and Cys114. A Ca(2+)-binding site is contributed by Asn78. Residue Asn147 is glycosylated (N-linked (GlcNAc...) asparagine). Ca(2+)-binding residues include Glu155, Gln156, Asp157, and Gln167. Cysteines 227 and 228 form a disulfide.

Belongs to the pentraxin family. In terms of assembly, homopentamer; disulfide-linked. Pentraxin (or pentaxin) have a discoid arrangement of 5 non-covalently bound subunits. Two of the five chains form a dimer linked by two interchain disulfide bonds located in the C-terminal heptapeptide and specific to rat CRP. Interacts with FCN1; may regulate monocyte activation by FCN1. Requires Ca(2+) as cofactor. Post-translationally, the last two cysteines are involved either in interchain disulfide bonds or in an intrachain bond. In terms of tissue distribution, found in plasma.

The protein localises to the secreted. Its function is as follows. Displays several functions associated with host defense: it promotes agglutination, bacterial capsular swelling, phagocytosis and complement fixation through its calcium-dependent binding to phosphorylcholine. Can interact with DNA and histones and may scavenge nuclear material released from damaged circulating cells. The polypeptide is C-reactive protein (Crp) (Rattus norvegicus (Rat)).